The chain runs to 215 residues: Orotate phosphoribosyltransferase (215 aa).

Position 26 (Lys26) interacts with 5-phospho-alpha-D-ribose 1-diphosphate. Orotate is bound at residue 34–35 (FF). Residues 72-73 (YK), Arg99, Lys100, Lys103, His105, and 124-132 (DDVITAGTA) contribute to the 5-phospho-alpha-D-ribose 1-diphosphate site. Orotate-binding residues include Thr128 and Arg156.

It belongs to the purine/pyrimidine phosphoribosyltransferase family. PyrE subfamily. Homodimer. Requires Mg(2+) as cofactor.

It carries out the reaction orotidine 5'-phosphate + diphosphate = orotate + 5-phospho-alpha-D-ribose 1-diphosphate. It participates in pyrimidine metabolism; UMP biosynthesis via de novo pathway; UMP from orotate: step 1/2. Functionally, catalyzes the transfer of a ribosyl phosphate group from 5-phosphoribose 1-diphosphate to orotate, leading to the formation of orotidine monophosphate (OMP). The protein is Orotate phosphoribosyltransferase of Hahella chejuensis (strain KCTC 2396).